We begin with the raw amino-acid sequence, 1860 residues long: Proprotein convertase subtilisin/kexin type 5 (1860 aa).

Positions 1 to 32 (MGWGSRCCCPGRLDLLCVLALLGGCLLPVCRT) are cleaved as a signal peptide. A propeptide spanning residues 33–114 (RVYTNHWAVK…QQVVKKRTKR (82 aa)) is cleaved from the precursor. Topologically, residues 115–1743 (DYDFSRAQST…VRPATEHFKT (1629 aa)) are extracellular. Positions 134-453 (MWYMHCSDNT…FGLMDAEAMV (320 aa)) constitute a Peptidase S8 domain. Active-site charge relay system residues include D171 and H212. 2 N-linked (GlcNAc...) asparagine glycosylation sites follow: N225 and N381. S386 (charge relay system) is an active-site residue. The 141-residue stretch at 461–601 (TVPRQHVCVE…SLVLYGTSVQ (141 aa)) folds into the P/Homo B domain. Positions 519–521 (RGD) match the Cell attachment site motif. FU repeat units follow at residues 630–680 (EDYA…GHYH), 683–730 (KKRC…GSYQ), 734–777 (KNLC…GRYF), 779–824 (GQDC…SYYF), 832–879 (YKSC…GEYV), 882–927 (HGHC…WKFE), 929–979 (ENQC…GHYA), 982–1028 (GNTC…GEVQ), 1032–1077 (YEEC…KTYS), 1079–1121 (EVEC…GFYG), 1125–1168 (MGEC…KTQE), 1177–1221 (LRKL…GTWP), 1225–1272 (SGSC…GSYA), 1274–1318 (DGIC…RHVA), 1320–1363 (KGVC…GFYA), 1365–1411 (SRHC…GTYY), 1415–1461 (TKEC…SEYW), 1465–1510 (APGC…GYYA), 1514–1559 (SNRC…GYYA), 1563–1610 (TGRC…HYYV), 1614–1659 (TQTC…GEYR), and 1665–1712 (KFNC…SDPP). A CRM (Cys-rich motif) region spans residues 636–1727 (CDPECSEVGC…CDCQDTTDEC (1092 aa)). A glycan (N-linked (GlcNAc...) asparagine) is linked at N665. N-linked (GlcNAc...) asparagine glycans are attached at residues N752, N802, and N852. A PLAC domain is found at 869–913 (MGAICKDGEYVDEHGHCQTCEASCAKCQGPTQEDCTTCPMTRIFD). The N-linked (GlcNAc...) asparagine glycan is linked to N1014. N-linked (GlcNAc...) asparagine glycosylation is present at N1191. A glycan (N-linked (GlcNAc...) asparagine) is linked at N1290. An N-linked (GlcNAc...) asparagine glycan is attached at N1497. N-linked (GlcNAc...) asparagine glycans are attached at residues N1685 and N1707. Residues 1744 to 1764 (ALFITSSMMLVLLLGAAVVVW) form a helical membrane-spanning segment. At 1765–1860 (KKSRGRVQPA…YDDESYSYYQ (96 aa)) the chain is on the cytoplasmic side. AC regions lie at residues 1807–1826 (VIEY…IVYM) and 1838–1860 (YGLL…SYYQ).

It belongs to the peptidase S8 family. As to expression, expressed in T-lymphocytes.

The protein localises to the secreted. The protein resides in the endomembrane system. Functionally, serine endoprotease that processes various proproteins by cleavage at paired basic amino acids, recognizing the RXXX[KR]R consensus motif. Likely functions in the constitutive and regulated secretory pathways. Plays an essential role in pregnancy establishment by proteolytic activation of a number of important factors such as BMP2, CALD1 and alpha-integrins. This chain is Proprotein convertase subtilisin/kexin type 5 (PCSK5), found in Homo sapiens (Human).